Here is a 94-residue protein sequence, read N- to C-terminus: MSSCPAIVNMKDDDGIGAMGAAVAFAAMGVFGIYFLWPVVGPTSAGMMMKAPGAAGWVICRAVFEANPQLYFTILRTAGAAAAAATFAACSIAS.

Over 1 to 15 (MSSCPAIVNMKDDDG) the chain is Cytoplasmic. The helical; Signal-anchor for type II membrane protein transmembrane segment at 16–36 (IGAMGAAVAFAAMGVFGIYFL) threads the bilayer. The Extracellular segment spans residues 37-94 (WPVVGPTSAGMMMKAPGAAGWVICRAVFEANPQLYFTILRTAGAAAAAATFAACSIAS).

Post-translationally, possible proteolysis of the C-terminal region from the predicted transmembrane domain to permit secretion and transport of the mature protein to the cell walls of the nucellus, allowing the spreading from the egg cell apparatus to the micropylar opening of the ovule. Expressed only in the egg apparatus, consisting of the egg cell and two synergids. Not detected in the central cell, antipodals, and nucellar and integumental cells.

It localises to the membrane. Involved in short-range signaling required for pollen tube attraction by the female gametophyte. Required for female fertility. This is Protein EGG APPARATUS-1 (Ea1) from Zea mays (Maize).